The following is a 354-amino-acid chain: MAAECGSGNCDAWAARDPSGILSPYKFNRREVQSEDVSLRITHCGVCYADVIWTRNMFNDSIYPLVPGHEIAGVVTEVGADVKGFKVGDHVGVGVYVNSCQDCENCNSSLENHCSKCVVTYNSVDSDGTVTKGGYSSHILVHQRYCFKIPADYPLSKAAPLLCAGITVYTPMIRHNMNQPGKSLGVIGLGGLGHMAVKFGKAFGLKVTVFSTSESKREEAINLLGADNFVISSDENQMESLKSSLHFIIDTASGDHQFDPYLSLLKVGGVMVLLSFPSEIKVHPENLNLAARSLAGSVTGGTKDIQEMINFCAANNVYPDIEMIKIDYVNEALQRLINRDVRFRFVIDIENSFK.

Zn(2+) is bound by residues Cys47, His69, Glu70, Cys100, Cys103, Cys106, Cys114, and Cys163. Residues Thr167, 188–193 (GLGGLG), 211–216 (STSESK), Thr251, and 297–299 (SVT) contribute to the NADP(+) site.

The protein belongs to the zinc-containing alcohol dehydrogenase family. In terms of assembly, homodimer. It depends on Zn(2+) as a cofactor.

It catalyses the reaction (E)-cinnamyl alcohol + NADP(+) = (E)-cinnamaldehyde + NADPH + H(+). The enzyme catalyses (E)-coniferol + NADP(+) = (E)-coniferaldehyde + NADPH + H(+). It carries out the reaction (E)-sinapyl alcohol + NADP(+) = (E)-sinapaldehyde + NADPH + H(+). The catalysed reaction is (E)-4-coumaroyl alcohol + NADP(+) = (E)-4-coumaraldehyde + NADPH + H(+). It catalyses the reaction (E)-caffeyl alcohol + NADP(+) = (E)-caffeyl aldehyde + NADPH + H(+). It functions in the pathway aromatic compound metabolism; phenylpropanoid biosynthesis. Its function is as follows. Involved in lignin biosynthesis. Catalyzes the final step specific for the production of lignin monomers. Catalyzes the NADPH-dependent reduction of coniferaldehyde, 5-hydroxyconiferaldehyde, sinapaldehyde, 4-coumaraldehyde and caffeyl aldehyde to their respective alcohols. This chain is Putative cinnamyl alcohol dehydrogenase 4, found in Oryza sativa subsp. japonica (Rice).